A 221-amino-acid chain; its full sequence is Carbonic anhydrase (221 aa).

Positions 57, 59, 112, and 115 each coordinate Zn(2+).

Belongs to the beta-class carbonic anhydrase family. The cofactor is Zn(2+).

Its subcellular location is the cytoplasm. It is found in the nucleus. It localises to the mitochondrion intermembrane space. The catalysed reaction is hydrogencarbonate + H(+) = CO2 + H2O. Catalyzes the reversible hydration of CO(2) to H(2)CO(3). The main role may be to provide inorganic carbon for the bicarbonate-dependent carboxylation reactions catalyzed by pyruvate carboxylase, acetyl-CoA carboxylase and carbamoyl-phosphate synthetase. Involved in protection against oxidative damage. Encodes a substrate for the non-classical protein export pathway for proteins that lack a cleavable signal sequence. The protein is Carbonic anhydrase (NCE103) of Saccharomyces cerevisiae (strain ATCC 204508 / S288c) (Baker's yeast).